A 316-amino-acid polypeptide reads, in one-letter code: DNA-directed RNA polymerase III subunit RPC6 (316 aa).

Ala2 is modified (N-acetylalanine). Glycyl lysine isopeptide (Lys-Gly) (interchain with G-Cter in SUMO2) cross-links involve residues Lys5 and Lys7. Residues Cys287, Cys290, Cys296, and Cys307 each contribute to the [4Fe-4S] cluster site.

This sequence belongs to the eukaryotic RPC34/RPC39 RNA polymerase subunit family. Component of the RNA polymerase III complex consisting of 17 subunits: a ten-subunit horseshoe-shaped catalytic core composed of POLR3A/RPC1, POLR3B/RPC2, POLR1C/RPAC1, POLR1D/RPAC2, POLR3K/RPC10, POLR2E/RPABC1, POLR2F/RPABC2, POLR2H/RPABC3, POLR2K/RPABC4 and POLR2L/RPABC5; a mobile stalk composed of two subunits POLR3H/RPC8 and CRCP/RPC9, protruding from the core and functioning primarily in transcription initiation; and additional subunits homologous to general transcription factors of the RNA polymerase II machinery, POLR3C/RPC3-POLR3F/RPC6-POLR3G/RPC7 heterotrimer required for transcription initiation and POLR3D/RPC4-POLR3E/RPC5 heterodimer involved in both transcription initiation and termination. Directly interacts with POLR3C. Interacts with TBP and TFIIIB90 and GTF3C4. Interacts with MAF1. As part of the RNA polymerase III complex, interacts with PKP2.

It is found in the nucleus. Functionally, DNA-dependent RNA polymerase catalyzes the transcription of DNA into RNA using the four ribonucleoside triphosphates as substrates. Specific peripheric component of RNA polymerase III (Pol III) which synthesizes small non-coding RNAs including 5S rRNA, snRNAs, tRNAs and miRNAs from at least 500 distinct genomic loci. Part of POLR3C/RPC3-POLR3F/RPC6-POLR3G/RPC7 heterotrimer that coordinates the dynamics of Pol III stalk and clamp modules during the transition from apo to elongation state. Pol III plays a key role in sensing and limiting infection by intracellular bacteria and DNA viruses, including varicella zoster virus. Acts as a nuclear and cytosolic DNA sensor detecting AT-rich DNA, involved in innate immune response. Can sense non-self dsDNA that serves as template for transcription into dsRNA. The non-self RNA polymerase III transcripts, such as Epstein-Barr virus-encoded RNAs (EBERs) induce type I interferon and NF-kappa-B through the RIG-I pathway. Preferentially binds double-stranded DNA (dsDNA). The protein is DNA-directed RNA polymerase III subunit RPC6 of Mus musculus (Mouse).